Consider the following 88-residue polypeptide: Bombyxin B-8 (88 aa).

The N-terminal stretch at 1–18 (MKTSVIFVLIVLNLMWSG) is a signal peptide. 3 disulfide bridges follow: Cys28–Cys74, Cys40–Cys87, and Cys73–Cys78. The propeptide at 47–65 (GGAQYAPYFWQKAYLGSRG) is c peptide like.

Belongs to the insulin family. As to quaternary structure, heterodimer of a B chain and an A chain linked by two disulfide bonds.

The protein resides in the secreted. Brain peptide responsible for activation of prothoracic glands to produce ecdysone in insects. This Bombyx mori (Silk moth) protein is Bombyxin B-8 (BBXB8).